Consider the following 419-residue polypeptide: RNA polymerase sigma factor sigD, chloroplastic (419 aa).

Residues 1-52 constitute a chloroplast transit peptide; sequence MATTIPTTATATMCPSPPVPTISPLLRTTHQCQPSPSLSSPFSIKLSTALVC. The short motif at 207 to 220 is the Polymerase core binding element; the sequence is DLIQEGSIGLLRGA. Residues 377–396 constitute a DNA-binding region (H-T-H motif); it reads FEEIGKSLKLSRERVRQING.

Belongs to the sigma-70 factor family. As to expression, mostly expressed in leaves, and to a lesser extent in roots. Present in seedlings.

It localises to the plastid. The protein resides in the chloroplast. Sigma factors are initiation factors that promote the attachment of plastid-encoded RNA polymerase (PEP) to specific initiation sites and are then released. Regulates transcription of the ndhF gene which codes for a subunit of the plastid NDH [NAD(P)H dehydrogenase] complex. The protein is RNA polymerase sigma factor sigD, chloroplastic (SIGD) of Arabidopsis thaliana (Mouse-ear cress).